Here is a 317-residue protein sequence, read N- to C-terminus: MYDWLNALPKAELHLHLEGSLEPELLFALAERNRIALPWNDVEALRKAYAFNNLQEFLDLYYRGADVLRTEQDFYDLTWAYLLRCKEQNVIHTEPFFDPQTHTDRGIAFEVVLAGITGALKDGKSKLGVDSGLILSFLRHLSEDEAEKTLDQALPFRDAFVAVGLDSSEMGHPPSKFQRVFDRARNEGFLTVAHAGEEGPPEYIWEALDLLKIQRIDHGVRAIEDERLMQRIIDEQIPLTVCPLSNTKLCVFDDMAQHNILDMLERGVKVTVNSDDPAYFGGYVTENFHALHTHLGMTEDQARRLAQNSLDARLVKP.

His14, His16, and His194 together coordinate Zn(2+). Glu197 functions as the Proton donor in the catalytic mechanism. Residue Asp275 coordinates Zn(2+). Asp276 contacts substrate.

Belongs to the metallo-dependent hydrolases superfamily. Adenosine and AMP deaminases family. Adenine deaminase type 2 subfamily. It depends on Zn(2+) as a cofactor.

It carries out the reaction adenine + H2O + H(+) = hypoxanthine + NH4(+). Functionally, catalyzes the hydrolytic deamination of adenine to hypoxanthine. Plays an important role in the purine salvage pathway and in nitrogen catabolism. In Pseudomonas syringae pv. tomato (strain ATCC BAA-871 / DC3000), this protein is Adenine deaminase.